A 165-amino-acid chain; its full sequence is Small ribosomal subunit protein uS5 (165 aa).

One can recognise an S5 DRBM domain in the interval 13 to 76 (LEEKVLVVNR…EAARKNLITI (64 aa)).

This sequence belongs to the universal ribosomal protein uS5 family. As to quaternary structure, part of the 30S ribosomal subunit. Contacts proteins S4 and S8.

Its function is as follows. With S4 and S12 plays an important role in translational accuracy. In terms of biological role, located at the back of the 30S subunit body where it stabilizes the conformation of the head with respect to the body. The chain is Small ribosomal subunit protein uS5 from Chlamydia felis (strain Fe/C-56) (Chlamydophila felis).